Reading from the N-terminus, the 143-residue chain is Transcriptional regulator MraZ (143 aa).

2 SpoVT-AbrB domains span residues 5–47 and 76–119; these read EYKH…SLKE and ACEC…SEEN.

The protein belongs to the MraZ family. As to quaternary structure, forms oligomers.

It localises to the cytoplasm. The protein resides in the nucleoid. In Caldicellulosiruptor saccharolyticus (strain ATCC 43494 / DSM 8903 / Tp8T 6331), this protein is Transcriptional regulator MraZ.